Here is a 247-residue protein sequence, read N- to C-terminus: VQ motif-containing protein 4 (247 aa).

The interval 1–128 (MENSPRYREA…SSSSASGFRL (128 aa)) is disordered. Serine 16 carries the phosphoserine modification. A compositionally biased stretch (low complexity) spans 21–37 (NSNNSCGMSSSSESNKP). Composition is skewed to polar residues over residues 48 to 75 (RSESGNPYPTTFVQADTSSFKQVVQMLT) and 87 to 106 (LKPNPTHHQPDPRSTPSSFS). Positions 67 to 76 (FKQVVQMLTG) match the VQ motif. 5 positions are modified to phosphoserine: serine 106, serine 155, serine 163, serine 165, and serine 175. Residue threonine 178 is modified to Phosphothreonine. Positions 184–247 (PFDRSGSSNQ…VSGSSSASTS (64 aa)) are disordered. The residue at position 194 (serine 194) is a Phosphoserine. Residues 200-210 (AEEKAMKERGF) are compositionally biased toward basic and acidic residues. Position 215 is a phosphoserine (serine 215). Threonine 219 and threonine 234 each carry phosphothreonine. Phosphoserine occurs at positions 235, 239, and 243. The span at 236–247 (PRVSGSSSASTS) shows a compositional bias: polar residues.

In terms of assembly, interacts with MPK3 and MPK6. Phosphorylated on serine and threonine residues by MPK6 following treatment with the pathogen-associated molecular pattern (PAMP) flg22. MAP kinase-mediated phosphorylation after PAMP elicitation causes degradation of VQ4, allowing WRKY33 to promote transcription from defense genes.

It is found in the nucleus. Functionally, acts as a negative regulator of WRKY33 transcription factor activity in the promotion of defense gene expression. Acts as a negative regulator of pathogen-associated molecular pattern (PAMP)-induced responses to modulate resistance to pathogens. This Arabidopsis thaliana (Mouse-ear cress) protein is VQ motif-containing protein 4.